The primary structure comprises 1330 residues: DNA-directed RNA polymerase subunit beta'' (1330 aa).

Residues cysteine 214, cysteine 282, cysteine 289, and cysteine 292 each contribute to the Zn(2+) site.

Belongs to the RNA polymerase beta' chain family. RpoC2 subfamily. In plastids the minimal PEP RNA polymerase catalytic core is composed of four subunits: alpha, beta, beta', and beta''. When a (nuclear-encoded) sigma factor is associated with the core the holoenzyme is formed, which can initiate transcription. Zn(2+) is required as a cofactor.

The protein resides in the plastid. It is found in the chloroplast. The enzyme catalyses RNA(n) + a ribonucleoside 5'-triphosphate = RNA(n+1) + diphosphate. DNA-dependent RNA polymerase catalyzes the transcription of DNA into RNA using the four ribonucleoside triphosphates as substrates. This chain is DNA-directed RNA polymerase subunit beta'', found in Physcomitrium patens (Spreading-leaved earth moss).